A 68-amino-acid polypeptide reads, in one-letter code: Large ribosomal subunit protein bL32 (68 aa).

This sequence belongs to the bacterial ribosomal protein bL32 family.

The polypeptide is Large ribosomal subunit protein bL32 (Orientia tsutsugamushi (strain Ikeda) (Rickettsia tsutsugamushi)).